Reading from the N-terminus, the 160-residue chain is Serine-protein kinase RsbW (160 aa).

The protein belongs to the anti-sigma-factor family.

The enzyme catalyses L-seryl-[protein] + ATP = O-phospho-L-seryl-[protein] + ADP + H(+). It carries out the reaction L-threonyl-[protein] + ATP = O-phospho-L-threonyl-[protein] + ADP + H(+). Functionally, negative regulator of sigma-B activity. Phosphorylates and inactivates its specific antagonist protein, RsbV. Upon phosphorylation of RsbV, RsbW is released and binds to sigma-B, thereby blocking its ability to form an RNA polymerase holoenzyme (E-sigma-B). The protein is Serine-protein kinase RsbW of Bacillus cereus (strain Q1).